Here is a 131-residue protein sequence, read N- to C-terminus: Type 3 secretion system pilotin (131 aa).

The signal sequence occupies residues 1–15 (MSRIIALIISFLLVG). C16 is lipidated: N-palmitoyl cysteine. C16 is lipidated: S-diacylglycerol cysteine.

It belongs to the ExsB/YscW family. As to quaternary structure, interacts with YscC/SctC.

Its subcellular location is the cell outer membrane. Involved in the synthesis of the type III secretion system (T3SS), also called injectisome, which is used to inject bacterial effector proteins into eukaryotic host cells. Pilot protein that is required for the proper localization of the secretin YscC/SctC in the outer membrane. Also required for efficient oligomerization of YscC/SctC and stabilization of the oligomers. This chain is Type 3 secretion system pilotin, found in Yersinia enterocolitica.